Here is a 153-residue protein sequence, read N- to C-terminus: MKIILLDNIDKLGNKGSEVVVRSGYARNFLIPKSKAMLATKKNIEIFKAQQLELQSKAIEAQTQAEFCAKTINRLGSITIKAKSGVEGKLFGSIGSRDIATAITAASGFNISKSQIRLPNHDVLRTIGTYSINIHIYNDIFSKINVIILDEIV.

This sequence belongs to the bacterial ribosomal protein bL9 family.

In terms of biological role, binds to the 23S rRNA. In Blochmanniella pennsylvanica (strain BPEN), this protein is Large ribosomal subunit protein bL9.